The following is a 308-amino-acid chain: F-actin-capping protein subunit alpha (308 aa).

This sequence belongs to the F-actin-capping protein alpha subunit family. In terms of assembly, component of the F-actin capping complex, composed of a heterodimer of an alpha and a beta subunit.

In terms of biological role, F-actin-capping proteins bind in a Ca(2+)-independent manner to the fast growing ends of actin filaments (barbed end) thereby blocking the exchange of subunits at these ends. Unlike other capping proteins (such as gelsolin and severin), these proteins do not sever actin filaments. This Arabidopsis thaliana (Mouse-ear cress) protein is F-actin-capping protein subunit alpha.